Consider the following 979-residue polypeptide: Collagen alpha-2(I) chain (979 aa).

The disordered stretch occupies residues 1 to 979; sequence SGGFDFSFLP…FGYEGDFYRA (979 aa). 4-hydroxyproline is present on residues proline 10, proline 13, proline 35, and proline 41. Over residues 28–41 the composition is skewed to low complexity; it reads LMGPRGPPGASGAP. At lysine 88 the chain carries 5-hydroxylysine; alternate. Lysine 88 is a glycosylation site (O-linked (Gal...) hydroxylysine; alternate). Residues 128–157 show a composition bias toward low complexity; sequence VGAPGPAGARGSDGSVGPVGPAGPIGSAGP. The segment covering 256-265 has biased composition (gly residues); sequence GESGGKGEPG. Positions 266 to 276 are enriched in low complexity; sequence SAGPQGPPGSS. Gly residues predominate over residues 298–307; the sequence is GLRGGPGSRG. 4-hydroxyproline is present on residues proline 341 and proline 344. A compositionally biased stretch (gly residues) spans 434 to 443; the sequence is GVQGGKGEQG. Composition is skewed to low complexity over residues 490–507 and 519–529; these read PGES…SRGP and EPGVVGAPGTA. Gly residues predominate over residues 530-548; that stretch reads GPAGSGGPGERGAAGIPGG. 2 stretches are compositionally biased toward low complexity: residues 570–599 and 606–626; these read RGAP…PRGS and VGPA…QPGA. Over residues 627–636 the composition is skewed to basic and acidic residues; that stretch reads KGERGTKGPK. Low complexity predominate over residues 644 to 654; it reads PTGPVGSAGPA. The segment covering 664-673 has biased composition (gly residues); it reads GSRGDGGPPG. The segment covering 675-684 has biased composition (low complexity); sequence TGFPGAAGRT. Over residues 721 to 730 the composition is skewed to gly residues; sequence GETGAGGPPG. Composition is skewed to low complexity over residues 738 to 765 and 773 to 783; these read SGEP…LGLP and LPGVAGAVGEP. Residues 784–802 show a composition bias toward gly residues; it reads GPLGIGPPGARGPSGGDGL. Composition is skewed to low complexity over residues 811-833 and 841-856; these read YAGN…VGPA and EPGP…ALGP. Basic and acidic residues predominate over residues 866-877; sequence RGDKGEPGDKGP. The span at 951–961 shows a compositional bias: pro residues; that stretch reads GPGPPGPPGPP.

The protein belongs to the fibrillar collagen family. As to quaternary structure, trimers of one alpha 2(I) and two alpha 1(I) chains. Interacts (via C-terminus) with TMEM131 (via PapD-L domain); the interaction is direct and is involved in assembly and TRAPPIII ER-to-Golgi transport complex-dependent secretion of collagen. In terms of processing, prolines at the third position of the tripeptide repeating unit (G-X-Y) are hydroxylated in some or all of the chains. As to expression, expressed in bones.

It is found in the secreted. It localises to the extracellular space. The protein localises to the extracellular matrix. Its function is as follows. Type I collagen is a member of group I collagen (fibrillar forming collagen). The polypeptide is Collagen alpha-2(I) chain (Neocnus dousman (Slow ground sloth)).